The following is a 35-amino-acid chain: RSCIDTIPKSRCTAFQCKHSMKYRLSFCRKTCGTC.

Positions 3 to 35 (CIDTIPKSRCTAFQCKHSMKYRLSFCRKTCGTC) constitute a ShKT domain. 3 cysteine pairs are disulfide-bonded: Cys-3–Cys-35, Cys-12–Cys-28, and Cys-17–Cys-32.

This sequence belongs to the sea anemone type 1 potassium channel toxin family. Type 1a subfamily.

The protein localises to the secreted. Its subcellular location is the nematocyst. Peptide with both antimicrobial and neurotoxin activities. Inhibits voltage-dependent potassium channels. Potently blocks Kv1.1/KCNA1 (IC(50)=6.7-87 pM) and Kv1.3/KCNA3 (IC(50)=10-250 pM). Less potently blocks Kv1.4/KCNA4 (IC(50)=0.31 nM), and Kv1.6/KCNA6 (IC(50)=0.16 nM). Shows moderate activity on Kv1.2/KCNA2 (IC(50)=9 nM), Kv1.7/KCNA7 (IC(50)=11.5 nM), and KCa3.1/KCNN4 (Kd=0.03-30 nM). Blocks Kv channels by binding to a shallow vestibule at the outer entrance to the ion conduction pathway and occluding the entrance to the pore. Shows antibacterial activity against all tested bacteria (the Gram-positive bacteria B.subtilis and S.aureus, and the Gram-negative bacteria S.typhimurium and P.aeruginosa). This chain is Kappa-stichotoxin-She3a, found in Stichodactyla helianthus (Sun anemone).